A 307-amino-acid chain; its full sequence is Aspartate carbamoyltransferase catalytic subunit (307 aa).

The carbamoyl phosphate site is built by Arg59 and Thr60. Lys87 is an L-aspartate binding site. Carbamoyl phosphate-binding residues include Arg109, His137, and Gln140. Arg173 and Arg223 together coordinate L-aspartate. Carbamoyl phosphate is bound by residues Gly266 and Pro267.

This sequence belongs to the aspartate/ornithine carbamoyltransferase superfamily. ATCase family. As to quaternary structure, heterododecamer (2C3:3R2) of six catalytic PyrB chains organized as two trimers (C3), and six regulatory PyrI chains organized as three dimers (R2).

It catalyses the reaction carbamoyl phosphate + L-aspartate = N-carbamoyl-L-aspartate + phosphate + H(+). It functions in the pathway pyrimidine metabolism; UMP biosynthesis via de novo pathway; (S)-dihydroorotate from bicarbonate: step 2/3. Functionally, catalyzes the condensation of carbamoyl phosphate and aspartate to form carbamoyl aspartate and inorganic phosphate, the committed step in the de novo pyrimidine nucleotide biosynthesis pathway. This chain is Aspartate carbamoyltransferase catalytic subunit, found in Helicobacter pylori (strain HPAG1).